The sequence spans 183 residues: Ferritin heavy chain (183 aa).

N-acetylmethionine is present on Met-1. An N-acetylthreonine; in Ferritin heavy chain, N-terminally processed modification is found at Thr-2. Residues 11-160 enclose the Ferritin-like diiron domain; the sequence is QNYHQDSEAA…DHVTNLRKMG (150 aa). Residues Glu-28, Glu-63, His-66, Glu-108, and Gln-142 each coordinate Fe cation. Phosphoserine is present on residues Ser-179 and Ser-183.

Belongs to the ferritin family. As to quaternary structure, oligomer of 24 subunits. There are two types of subunits: L (light) chain and H (heavy) chain. The major chain can be light or heavy, depending on the species and tissue type. In the human liver, the heavy chain is predominant. The functional molecule forms a roughly spherical shell with a diameter of 12 nm and contains a central cavity into which the insoluble mineral iron core is deposited. Interacts with NCOA4; NCOA4 promotes targeting of the iron-binding ferritin complex to autolysosomes following starvation or iron depletion. In terms of tissue distribution, expressed in the liver.

It is found in the cytoplasm. The protein resides in the lysosome. The protein localises to the cytoplasmic vesicle. Its subcellular location is the autophagosome. The catalysed reaction is 4 Fe(2+) + O2 + 4 H(+) = 4 Fe(3+) + 2 H2O. Its function is as follows. Stores iron in a soluble, non-toxic, readily available form. Important for iron homeostasis. Has ferroxidase activity. Iron is taken up in the ferrous form and deposited as ferric hydroxides after oxidation. Also plays a role in delivery of iron to cells. Mediates iron uptake in capsule cells of the developing kidney. Delivery to lysosomes is mediated by the cargo receptor NCOA4 for autophagic degradation and release of iron. This Homo sapiens (Human) protein is Ferritin heavy chain (FTH1).